Consider the following 381-residue polypeptide: Alkanesulfonate monooxygenase (381 aa).

It belongs to the SsuD family. In terms of assembly, homotetramer.

It carries out the reaction an alkanesulfonate + FMNH2 + O2 = an aldehyde + FMN + sulfite + H2O + 2 H(+). In terms of biological role, catalyzes the desulfonation of aliphatic sulfonates. The polypeptide is Alkanesulfonate monooxygenase (Escherichia coli O1:K1 / APEC).